The chain runs to 371 residues: Galanin receptor type 2 (371 aa).

Residues 1-27 (MNGSDSQGAEDSSQEGGGGWQPEAVLV) are Extracellular-facing. Asn-2 is a glycosylation site (N-linked (GlcNAc...) asparagine). Residues 28–48 (PLFFALIFLVGAVGNALVLAV) form a helical membrane-spanning segment. The Cytoplasmic segment spans residues 49–59 (LLRGGQAVSTT). The chain crosses the membrane as a helical span at residues 60-80 (NLFILNLGVADLCFILCCVPF). At 81-98 (QATIYTLDDWVFGSLLCK) the chain is on the extracellular side. Cys-97 and Cys-174 are oxidised to a cystine. Residues 99-120 (AVHFLIFLTMHASSFTLAAVSL) traverse the membrane as a helical segment. Over 121–140 (DRYLAIRYPLHSRELRTPRN) the chain is Cytoplasmic. A helical membrane pass occupies residues 141 to 161 (ALAAIGLIWGLALLFSGPYLS). At 162 to 186 (YYSQSQLANLTVCHPAWSAPRRRAM) the chain is on the extracellular side. Residues 187–207 (DLCTFVFSYLLPVLVLSLTYA) traverse the membrane as a helical segment. Residues 208–236 (RTLHYLWRTVDPVAAGSGSQRAKRKVTRM) are Cytoplasmic-facing. The chain crosses the membrane as a helical span at residues 237–257 (IVIVAVLFCLCWMPHHALILC). Over 258–259 (VW) the chain is Extracellular. Residues 260-280 (FGRFPLTRATYALRILSHLVS) traverse the membrane as a helical segment. Residues 281-371 (YANSCVNPIV…TLSRTLDPAC (91 aa)) are Cytoplasmic-facing.

It belongs to the G-protein coupled receptor 1 family.

It localises to the cell membrane. Receptor for the hormone galanin, GALP and spexin-1. The activity of this receptor is mediated by G proteins that activate the phospholipase C/protein kinase C pathway (via G(q)) and that inhibit adenylyl cyclase (via G(i)). This is Galanin receptor type 2 (Galr2) from Mus musculus (Mouse).